A 595-amino-acid chain; its full sequence is NADH-quinone oxidoreductase subunit C/D (595 aa).

Residues 1–186 (MVTDNSKATD…TPYFLNNAKQ (186 aa)) form an NADH dehydrogenase I subunit C region. The segment at 210–595 (DFMFLNLGPN…IDIVMADTDR (386 aa)) is NADH dehydrogenase I subunit D.

The protein in the N-terminal section; belongs to the complex I 30 kDa subunit family. It in the C-terminal section; belongs to the complex I 49 kDa subunit family. NDH-1 is composed of 13 different subunits. Subunits NuoB, CD, E, F, and G constitute the peripheral sector of the complex.

It is found in the cell inner membrane. It catalyses the reaction a quinone + NADH + 5 H(+)(in) = a quinol + NAD(+) + 4 H(+)(out). Functionally, NDH-1 shuttles electrons from NADH, via FMN and iron-sulfur (Fe-S) centers, to quinones in the respiratory chain. The immediate electron acceptor for the enzyme in this species is believed to be ubiquinone. Couples the redox reaction to proton translocation (for every two electrons transferred, four hydrogen ions are translocated across the cytoplasmic membrane), and thus conserves the redox energy in a proton gradient. The polypeptide is NADH-quinone oxidoreductase subunit C/D (Psychrobacter sp. (strain PRwf-1)).